The sequence spans 355 residues: Elongation factor Ts (355 aa).

Positions T82–V85 are involved in Mg(2+) ion dislocation from EF-Tu.

This sequence belongs to the EF-Ts family.

It is found in the cytoplasm. In terms of biological role, associates with the EF-Tu.GDP complex and induces the exchange of GDP to GTP. It remains bound to the aminoacyl-tRNA.EF-Tu.GTP complex up to the GTP hydrolysis stage on the ribosome. The chain is Elongation factor Ts from Helicobacter pylori (strain Shi470).